The sequence spans 101 residues: Small ribosomal subunit protein uS14 (101 aa).

This sequence belongs to the universal ribosomal protein uS14 family. In terms of assembly, part of the 30S ribosomal subunit. Contacts proteins S3 and S10.

Its function is as follows. Binds 16S rRNA, required for the assembly of 30S particles and may also be responsible for determining the conformation of the 16S rRNA at the A site. The polypeptide is Small ribosomal subunit protein uS14 (Hydrogenovibrio crunogenus (strain DSM 25203 / XCL-2) (Thiomicrospira crunogena)).